The sequence spans 75 residues: uncharacterized protein (75 aa).

Residues 1–23 are disordered; that stretch reads MADAMDLAQLREQEDRERHISNA. Residues 9-20 are compositionally biased toward basic and acidic residues; that stretch reads QLREQEDRERHI. The dksA C4-type zinc-finger motif lies at 35–59; sequence CEECDAPIPEARRRAIPGVQCCVTC.

This is an uncharacterized protein from Escherichia phage 186 (Bacteriophage 186).